The following is a 344-amino-acid chain: Dihydroorotate dehydrogenase (quinone) (344 aa).

FMN-binding positions include 64 to 68 (AGLDK) and T88. Residue K68 coordinates substrate. 113–117 (NRMGF) is a binding site for substrate. Residues N144 and N177 each contribute to the FMN site. A substrate-binding site is contributed by N177. Catalysis depends on S180, which acts as the Nucleophile. N182 is a binding site for substrate. Residues K222 and T250 each contribute to the FMN site. Substrate is bound at residue 251-252 (NT). FMN-binding positions include G273, G302, and 323–324 (YS).

Belongs to the dihydroorotate dehydrogenase family. Type 2 subfamily. As to quaternary structure, monomer. FMN is required as a cofactor.

The protein resides in the cell membrane. The catalysed reaction is (S)-dihydroorotate + a quinone = orotate + a quinol. It participates in pyrimidine metabolism; UMP biosynthesis via de novo pathway; orotate from (S)-dihydroorotate (quinone route): step 1/1. Functionally, catalyzes the conversion of dihydroorotate to orotate with quinone as electron acceptor. The chain is Dihydroorotate dehydrogenase (quinone) from Polynucleobacter necessarius subsp. necessarius (strain STIR1).